The sequence spans 334 residues: Endoplasmic reticulum junction formation protein lunapark (334 aa).

The Cytoplasmic segment spans residues 1-40 (MGWFFQKKKEFDFGGELDRLEMKLEEAQYNIDNIQSQKKK). Positions 12-42 (DFGGELDRLEMKLEEAQYNIDNIQSQKKKIL) form a coiled coil. Residues 41–61 (ILFRYTVCSLAIYTIGMAVWA) form a helical membrane-spanning segment. The Lumenal segment spans residues 62 to 78 (SRSSILFQHPLFSKLFR). A helical membrane pass occupies residues 79 to 99 (ISLYILGVFSLYMFRWAIAWF). A coiled-coil region spans residues 99-127 (FCEKRLSRARMNLHKLNAEKRKILDALKS). The Cytoplasmic portion of the chain corresponds to 100-334 (CEKRLSRARM…SVPESLTPTK (235 aa)). A C4-type; plays a role in ER morphology zinc finger spans residues 201 to 227 (CSHCFHHNGLASYGEKASDVRYVCLFC). Residues 237–315 (KSLPSSEMDS…SSPDASYNSV (79 aa)) form a disordered region. Residues 239–252 (LPSSEMDSNLQTNP) show a composition bias toward polar residues. Residues 253–270 (SSISKGKKNNSNNTTQKG) are compositionally biased toward low complexity. Residues 273 to 283 (IISSPQVINAS) are compositionally biased toward polar residues. Ser284 carries the post-translational modification Phosphoserine. A compositionally biased stretch (low complexity) spans 297–315 (ALPTSPLSSSSPDASYNSV).

The protein belongs to the lunapark family.

The protein resides in the endoplasmic reticulum membrane. It localises to the golgi apparatus membrane. Functionally, plays a role in tubular endoplasmic reticulum network formation and maintenance. The sequence is that of Endoplasmic reticulum junction formation protein lunapark (lnp1) from Schizosaccharomyces pombe (strain 972 / ATCC 24843) (Fission yeast).